An 81-amino-acid chain; its full sequence is Acyl carrier protein (81 aa).

In terms of domain architecture, Carrier spans Ala-2–Ala-77. Ser-37 is modified (O-(pantetheine 4'-phosphoryl)serine).

The protein belongs to the acyl carrier protein (ACP) family. 4'-phosphopantetheine is transferred from CoA to a specific serine of apo-ACP by AcpS. This modification is essential for activity because fatty acids are bound in thioester linkage to the sulfhydryl of the prosthetic group.

It localises to the cytoplasm. It functions in the pathway lipid metabolism; fatty acid biosynthesis. Functionally, carrier of the growing fatty acid chain in fatty acid biosynthesis. This is Acyl carrier protein from Koribacter versatilis (strain Ellin345).